Reading from the N-terminus, the 522-residue chain is Neutral amino acid uniporter 4 (522 aa).

Transmembrane regions (helical) follow at residues 115–135 (AGVL…IHCM), 181–201 (LVDW…FVFL), 226–246 (SLDL…LVFI), 255–275 (LSFF…QYVI), 293–313 (YPLF…VLPL), 329–349 (IGMA…YFCF), 377–397 (FGIY…ILPA), 409–429 (LCEF…AVLI), 435–455 (VISF…PPLV), and 467–487 (PWVI…FIAG). Asn515 carries N-linked (GlcNAc...) asparagine glycosylation.

The protein belongs to the amino acid/polyamine transporter 2 family.

The protein resides in the lysosome membrane. It carries out the reaction L-tryptophan(in) = L-tryptophan(out). It catalyses the reaction L-alanine(in) = L-alanine(out). The catalysed reaction is L-proline(in) = L-proline(out). Uniporter that mediates the transport of neutral amino acids like L-tryptophan, proline and alanine. The transport activity is sodium ions-independent, electroneutral and therefore functions via facilitated diffusion. This chain is Neutral amino acid uniporter 4, found in Xenopus laevis (African clawed frog).